A 275-amino-acid chain; its full sequence is Bis(5'-nucleosyl)-tetraphosphatase, symmetrical (275 aa).

Belongs to the Ap4A hydrolase family.

The catalysed reaction is P(1),P(4)-bis(5'-adenosyl) tetraphosphate + H2O = 2 ADP + 2 H(+). Hydrolyzes diadenosine 5',5'''-P1,P4-tetraphosphate to yield ADP. The protein is Bis(5'-nucleosyl)-tetraphosphatase, symmetrical of Hamiltonella defensa subsp. Acyrthosiphon pisum (strain 5AT).